A 672-amino-acid polypeptide reads, in one-letter code: uncharacterized protein (672 aa).

The first 24 residues, 1 to 24 (MKTLKVLKIFIIVYISSVSLESFA), serve as a signal peptide directing secretion. 2 helical membrane-spanning segments follow: residues 226-246 (IIGA…ALNK) and 254-274 (ITLF…LGPL). Residues 363–372 (SNGTSGNNKP) show a composition bias toward polar residues. Positions 363–384 (SNGTSGNNKPIPNFDPDGKKDR) are disordered. 4 consecutive transmembrane segments (helical) span residues 410–430 (IILV…LYFI), 436–456 (CMVT…MVLF), 469–489 (VCIS…LLIT), and 562–582 (VVSI…FYYF). Positions 628 to 646 (HGKSSLGDKPDIGNKRKDG) are enriched in basic and acidic residues. The interval 628–672 (HGKSSLGDKPDIGNKRKDGAQQGEDAVNSSGGEVADLASGSGGGK) is disordered.

The protein belongs to the TrbL/VirB6 family.

It localises to the cell membrane. This is an uncharacterized protein from Rickettsia prowazekii (strain Madrid E).